Reading from the N-terminus, the 459-residue chain is Kelch-like protein terF (459 aa).

Kelch repeat units follow at residues 92-144, 145-196, 198-248, 251-304, 306-354, and 355-405; these read STVV…LVGD, EIFV…VVDG, IYYL…TVVV, TIYL…IYRD, LYIL…TIGS, and LIFT…VYKG.

Its pathway is secondary metabolite biosynthesis. Its function is as follows. Kelch-like protein; part of the gene cluster that mediates the biosynthesis of terrein, a fungal metabolite with ecological, antimicrobial, antiproliferative, and antioxidative activities. The first step in the pathway is performed by the polyketide synthase terA that produces 4-hydroxy-6-methylpyranon (4-HMP), orsellinic acid (OA), and 2,3-dehydro-6-hydroxymellein (2,3-dehydro-6-HM) by condensing acetyl-CoA with two, three, or four malonyl-CoA units, respectively. 4-HMP and OA are not pathway intermediates, but are rather shunt or side products. 2,3-dehydro-6-HM is further converted to 6-hydroxymellein (6-HM) by the 6-hydroxymellein synthase terB. The monooxygenases terC and terD, the multicopper oxidase terE and the Kelch-like protein terF are then involved in the transformation of 6-HM to terrein. Even if they are co-regulated with the other terrein cluster genes, terH and terI seem to be dispensable for terrein production; whereas one or both of the 2 transporters terG and terJ are probably required for efficient secretion of metabolites. This chain is Kelch-like protein terF, found in Aspergillus terreus (strain NIH 2624 / FGSC A1156).